The primary structure comprises 198 residues: ATP-dependent Clp protease proteolytic subunit 1 (198 aa).

The active-site Nucleophile is serine 96. Histidine 121 is a catalytic residue.

It belongs to the peptidase S14 family. As to quaternary structure, fourteen ClpP subunits assemble into 2 heptameric rings which stack back to back to give a disk-like structure with a central cavity, resembling the structure of eukaryotic proteasomes.

The protein localises to the cytoplasm. The catalysed reaction is Hydrolysis of proteins to small peptides in the presence of ATP and magnesium. alpha-casein is the usual test substrate. In the absence of ATP, only oligopeptides shorter than five residues are hydrolyzed (such as succinyl-Leu-Tyr-|-NHMec, and Leu-Tyr-Leu-|-Tyr-Trp, in which cleavage of the -Tyr-|-Leu- and -Tyr-|-Trp bonds also occurs).. Its function is as follows. Cleaves peptides in various proteins in a process that requires ATP hydrolysis. Has a chymotrypsin-like activity. Plays a major role in the degradation of misfolded proteins. The sequence is that of ATP-dependent Clp protease proteolytic subunit 1 from Synechocystis sp. (strain ATCC 27184 / PCC 6803 / Kazusa).